The following is a 934-amino-acid chain: Coiled-coil domain-containing protein 39 (934 aa).

4 coiled-coil regions span residues 17 to 133 (IPVA…DGLK), 164 to 512 (SQQD…HNDL), 540 to 615 (VDRS…SQIR), and 664 to 826 (VIKA…EQDI). Positions 866-934 (LPTAKGPSSR…NIPKGKKLNK (69 aa)) are disordered. Residues 873–892 (SSRSSSQSSLSSIRSLEDSI) are compositionally biased toward low complexity. A phosphoserine mark is found at Ser-887 and Ser-895. Residues 912-925 (RSDSSRSSSGSNSN) show a composition bias toward low complexity.

This sequence belongs to the CCDC39 family.

It localises to the cytoplasm. The protein resides in the cytoskeleton. The protein localises to the cilium axoneme. Functionally, required for assembly of dynein regulatory complex (DRC) and inner dynein arm (IDA) complexes, which are responsible for ciliary beat regulation, thereby playing a central role in motility in cilia and flagella. Probably acts together with CCDC40 to form a molecular ruler that determines the 96 nanometer (nm) repeat length and arrangements of components in cilia and flagella. Not required for outer dynein arm complexes assembly. In Rattus norvegicus (Rat), this protein is Coiled-coil domain-containing protein 39 (Ccdc39).